The primary structure comprises 97 residues: Protein 9b (97 aa).

The region spanning 8–97 (VPPALHLVDP…PDEFVVVTAK (90 aa)) is the 9b domain.

This sequence belongs to the coronavirus group 2 protein 9b family. In terms of assembly, homodimer.

The protein localises to the host cytoplasmic vesicle membrane. It localises to the host cytoplasm. The sequence is that of Protein 9b from Rhinolophus sinicus (Chinese rufous horseshoe bat).